A 306-amino-acid polypeptide reads, in one-letter code: Ribosomal protein L11 methyltransferase (306 aa).

4 residues coordinate S-adenosyl-L-methionine: Thr154, Gly179, Asp201, and Asn242.

It belongs to the methyltransferase superfamily. PrmA family.

The protein localises to the cytoplasm. It carries out the reaction L-lysyl-[protein] + 3 S-adenosyl-L-methionine = N(6),N(6),N(6)-trimethyl-L-lysyl-[protein] + 3 S-adenosyl-L-homocysteine + 3 H(+). Methylates ribosomal protein L11. The polypeptide is Ribosomal protein L11 methyltransferase (Xanthomonas campestris pv. campestris (strain 8004)).